The following is a 298-amino-acid chain: Acetyl-coenzyme A carboxylase carboxyl transferase subunit beta (298 aa).

A disordered region spans residues 1-21; it reads MNQEVKSGKVLSPSTPWTQRP. The C4-type zinc finger occupies 20–67; it reads RPVPGIEVADEQQTLKATFTEPTIECPECHALVTRTAISFNAYVCPQC. Positions 41-298 constitute a CoA carboxyltransferase N-terminal domain; the sequence is PTIECPECHA…RLVSKLMNLP (258 aa). Zn(2+)-binding residues include Cys-45, Cys-48, Cys-64, and Cys-67.

Belongs to the AccD/PCCB family. In terms of assembly, acetyl-CoA carboxylase is a heterohexamer composed of biotin carboxyl carrier protein (AccB), biotin carboxylase (AccC) and two subunits each of ACCase subunit alpha (AccA) and ACCase subunit beta (AccD). The cofactor is Zn(2+).

It localises to the cytoplasm. The catalysed reaction is N(6)-carboxybiotinyl-L-lysyl-[protein] + acetyl-CoA = N(6)-biotinyl-L-lysyl-[protein] + malonyl-CoA. It participates in lipid metabolism; malonyl-CoA biosynthesis; malonyl-CoA from acetyl-CoA: step 1/1. In terms of biological role, component of the acetyl coenzyme A carboxylase (ACC) complex. Biotin carboxylase (BC) catalyzes the carboxylation of biotin on its carrier protein (BCCP) and then the CO(2) group is transferred by the transcarboxylase to acetyl-CoA to form malonyl-CoA. In Acinetobacter baumannii (strain SDF), this protein is Acetyl-coenzyme A carboxylase carboxyl transferase subunit beta.